The primary structure comprises 294 residues: 4-hydroxy-tetrahydrodipicolinate synthase (294 aa).

Thr-44 is a binding site for pyruvate. The Proton donor/acceptor role is filled by Tyr-132. The Schiff-base intermediate with substrate role is filled by Lys-160. Val-202 is a binding site for pyruvate.

Belongs to the DapA family. As to quaternary structure, homotetramer; dimer of dimers.

It is found in the cytoplasm. The catalysed reaction is L-aspartate 4-semialdehyde + pyruvate = (2S,4S)-4-hydroxy-2,3,4,5-tetrahydrodipicolinate + H2O + H(+). Its pathway is amino-acid biosynthesis; L-lysine biosynthesis via DAP pathway; (S)-tetrahydrodipicolinate from L-aspartate: step 3/4. Catalyzes the condensation of (S)-aspartate-beta-semialdehyde [(S)-ASA] and pyruvate to 4-hydroxy-tetrahydrodipicolinate (HTPA). In Leptospira biflexa serovar Patoc (strain Patoc 1 / Ames), this protein is 4-hydroxy-tetrahydrodipicolinate synthase.